The sequence spans 644 residues: Ribonuclease R (644 aa).

Residues Arg-211 to Phe-529 enclose the RNB domain. The 72-residue stretch at Leu-573–Ser-644 folds into the S1 motif domain.

The protein belongs to the RNR ribonuclease family. RNase R subfamily.

It localises to the cytoplasm. The catalysed reaction is Exonucleolytic cleavage in the 3'- to 5'-direction to yield nucleoside 5'-phosphates.. 3'-5' exoribonuclease that releases 5'-nucleoside monophosphates and is involved in maturation of structured RNAs. This is Ribonuclease R from Helicobacter pylori (strain ATCC 700392 / 26695) (Campylobacter pylori).